A 417-amino-acid chain; its full sequence is Queuine tRNA-ribosyltransferase accessory subunit 2 (417 aa).

Cys324, Cys326, Cys329, and His355 together coordinate Zn(2+).

Belongs to the queuine tRNA-ribosyltransferase family. QTRT2 subfamily. As to quaternary structure, heterodimer of a catalytic subunit and an accessory subunit. It depends on Zn(2+) as a cofactor.

It is found in the cytoplasm. In terms of biological role, non-catalytic subunit of the queuine tRNA-ribosyltransferase (TGT) that catalyzes the base-exchange of a guanine (G) residue with queuine (Q) at position 34 (anticodon wobble position) in tRNAs with GU(N) anticodons (tRNA-Asp, -Asn, -His and -Tyr), resulting in the hypermodified nucleoside queuosine (7-(((4,5-cis-dihydroxy-2-cyclopenten-1-yl)amino)methyl)-7-deazaguanosine). This Drosophila virilis (Fruit fly) protein is Queuine tRNA-ribosyltransferase accessory subunit 2.